Here is a 305-residue protein sequence, read N- to C-terminus: Sulfate adenylyltransferase subunit 2 (305 aa).

The protein belongs to the PAPS reductase family. CysD subfamily. In terms of assembly, heterodimer composed of CysD, the smaller subunit, and CysN.

It carries out the reaction sulfate + ATP + H(+) = adenosine 5'-phosphosulfate + diphosphate. It functions in the pathway sulfur metabolism; hydrogen sulfide biosynthesis; sulfite from sulfate: step 1/3. Its function is as follows. With CysN forms the ATP sulfurylase (ATPS) that catalyzes the adenylation of sulfate producing adenosine 5'-phosphosulfate (APS) and diphosphate, the first enzymatic step in sulfur assimilation pathway. APS synthesis involves the formation of a high-energy phosphoric-sulfuric acid anhydride bond driven by GTP hydrolysis by CysN coupled to ATP hydrolysis by CysD. The protein is Sulfate adenylyltransferase subunit 2 of Pseudomonas entomophila (strain L48).